The following is a 509-amino-acid chain: Putative aldehyde dehydrogenase family 7 member A1 homolog (509 aa).

Gly244 to Gly249 is a binding site for NAD(+). Catalysis depends on Glu266, which acts as the Proton acceptor. Catalysis depends on Cys300, which acts as the Nucleophile.

This sequence belongs to the aldehyde dehydrogenase family. Homotetramer.

It carries out the reaction an aldehyde + NAD(+) + H2O = a carboxylate + NADH + 2 H(+). The sequence is that of Putative aldehyde dehydrogenase family 7 member A1 homolog from Dictyostelium discoideum (Social amoeba).